The chain runs to 445 residues: Phosphoglucosamine mutase (445 aa).

The Phosphoserine intermediate role is filled by serine 102. Positions 102, 241, 243, and 245 each coordinate Mg(2+). Serine 102 carries the post-translational modification Phosphoserine.

It belongs to the phosphohexose mutase family. Requires Mg(2+) as cofactor. Post-translationally, activated by phosphorylation.

It carries out the reaction alpha-D-glucosamine 1-phosphate = D-glucosamine 6-phosphate. Its function is as follows. Catalyzes the conversion of glucosamine-6-phosphate to glucosamine-1-phosphate. The sequence is that of Phosphoglucosamine mutase from Shewanella pealeana (strain ATCC 700345 / ANG-SQ1).